Consider the following 247-residue polypeptide: Small ribosomal subunit protein uS2 (247 aa).

It belongs to the universal ribosomal protein uS2 family.

The chain is Small ribosomal subunit protein uS2 from Ralstonia nicotianae (strain ATCC BAA-1114 / GMI1000) (Ralstonia solanacearum).